The following is a 1142-amino-acid chain: Fibronectin type-III domain-containing protein 3A (1142 aa).

Positions 104-191 (YGDVDAHSTH…KSGKGKGGTQ (88 aa)) are disordered. Positions 107 to 145 (VDAHSTHGRSNFRDERSSKTYERLQKKLKDRQGTQKDKM) are enriched in basic and acidic residues. A compositionally biased stretch (low complexity) spans 146-158 (SSPPSSPQKCPSP). Ser-147, Ser-151, and Ser-157 each carry phosphoserine. Fibronectin type-III domains are found at residues 212–313 (NIVK…TLSC), 317–409 (IPNP…TSGC), 413–506 (MPAS…TCPD), 510–604 (IPVK…TPAV), 608–701 (PCLP…TAPG), 705–795 (QCKP…TPPS), 805–894 (EISD…TKPL), 895–989 (PPDP…TPKS), and 990–1095 (VPAA…TEPP). At Lys-328 the chain carries N6-acetyllysine. Residues 1121–1141 (NLVLFAFFSILIAFIIQYFVI) traverse the membrane as a helical segment.

This sequence belongs to the FNDC3 family.

It is found in the golgi apparatus membrane. Functionally, mediates spermatid-Sertoli adhesion during spermatogenesis. The chain is Fibronectin type-III domain-containing protein 3A (FNDC3A) from Pongo abelii (Sumatran orangutan).